The primary structure comprises 217 residues: Small ribosomal subunit protein uS3 (217 aa).

Positions 38–106 constitute a KH type-2 domain; that stretch reads IRQLIQTKLA…QVHINIVEIK (69 aa).

It belongs to the universal ribosomal protein uS3 family. In terms of assembly, part of the 30S ribosomal subunit. Forms a tight complex with proteins S10 and S14.

Binds the lower part of the 30S subunit head. Binds mRNA in the 70S ribosome, positioning it for translation. The polypeptide is Small ribosomal subunit protein uS3 (Lactococcus lactis subsp. lactis (strain IL1403) (Streptococcus lactis)).